The following is a 279-amino-acid chain: 4-diphosphocytidyl-2-C-methyl-D-erythritol kinase (279 aa).

Residue Lys10 is part of the active site. 91–101 is a binding site for ATP; that stretch reads PVASGIGGGSA. The active site involves Asp130.

Belongs to the GHMP kinase family. IspE subfamily.

The catalysed reaction is 4-CDP-2-C-methyl-D-erythritol + ATP = 4-CDP-2-C-methyl-D-erythritol 2-phosphate + ADP + H(+). It functions in the pathway isoprenoid biosynthesis; isopentenyl diphosphate biosynthesis via DXP pathway; isopentenyl diphosphate from 1-deoxy-D-xylulose 5-phosphate: step 3/6. Its function is as follows. Catalyzes the phosphorylation of the position 2 hydroxy group of 4-diphosphocytidyl-2C-methyl-D-erythritol. The polypeptide is 4-diphosphocytidyl-2-C-methyl-D-erythritol kinase (Ruegeria pomeroyi (strain ATCC 700808 / DSM 15171 / DSS-3) (Silicibacter pomeroyi)).